We begin with the raw amino-acid sequence, 103 residues long: Large ribosomal subunit protein bL28 (103 aa).

Belongs to the bacterial ribosomal protein bL28 family.

This chain is Large ribosomal subunit protein bL28, found in Anaplasma phagocytophilum (strain HZ).